Consider the following 97-residue polypeptide: Integration host factor subunit alpha (97 aa).

The protein belongs to the bacterial histone-like protein family. As to quaternary structure, heterodimer of an alpha and a beta chain.

This protein is one of the two subunits of integration host factor, a specific DNA-binding protein that functions in genetic recombination as well as in transcriptional and translational control. This Colwellia psychrerythraea (strain 34H / ATCC BAA-681) (Vibrio psychroerythus) protein is Integration host factor subunit alpha.